The sequence spans 578 residues: Asparagine synthetase [glutamine-hydrolyzing] 3 (578 aa).

Cys-2 acts as the For GATase activity in catalysis. Positions 2–185 (CGILAVLGCV…PGHIYSSKQG (184 aa)) constitute a Glutamine amidotransferase type-2 domain. Residues 50–54 (RLAIV), 75–77 (NGE), and Asp-98 each bind L-glutamine. The Asparagine synthetase domain occupies 210–450 (VRNTFEKAVI…LPKHILYRQK (241 aa)). ATP contacts are provided by residues Leu-231, Ile-267, and 341–342 (SG). Positions 555–572 (GEDKTEDSRPEKLQKLAE) are enriched in basic and acidic residues. Residues 555 to 578 (GEDKTEDSRPEKLQKLAEKTPAIV) form a disordered region.

The enzyme catalyses L-aspartate + L-glutamine + ATP + H2O = L-asparagine + L-glutamate + AMP + diphosphate + H(+). It functions in the pathway amino-acid biosynthesis; L-asparagine biosynthesis. In terms of biological role, essential for nitrogen assimilation, distribution and remobilization within the plant via the phloem. This chain is Asparagine synthetase [glutamine-hydrolyzing] 3 (ASN3), found in Arabidopsis thaliana (Mouse-ear cress).